Reading from the N-terminus, the 503-residue chain is Probable cytosol aminopeptidase (503 aa).

Mn(2+) contacts are provided by lysine 271 and aspartate 276. Residue lysine 283 is part of the active site. Mn(2+) contacts are provided by aspartate 294, aspartate 353, and glutamate 355. Arginine 357 is an active-site residue.

The protein belongs to the peptidase M17 family. The cofactor is Mn(2+).

Its subcellular location is the cytoplasm. The catalysed reaction is Release of an N-terminal amino acid, Xaa-|-Yaa-, in which Xaa is preferably Leu, but may be other amino acids including Pro although not Arg or Lys, and Yaa may be Pro. Amino acid amides and methyl esters are also readily hydrolyzed, but rates on arylamides are exceedingly low.. It catalyses the reaction Release of an N-terminal amino acid, preferentially leucine, but not glutamic or aspartic acids.. Its function is as follows. Presumably involved in the processing and regular turnover of intracellular proteins. Catalyzes the removal of unsubstituted N-terminal amino acids from various peptides. The protein is Probable cytosol aminopeptidase of Chlorobium phaeobacteroides (strain DSM 266 / SMG 266 / 2430).